A 317-amino-acid chain; its full sequence is Dehydrogenase/reductase SDR family protein 7-like (317 aa).

Topologically, residues 1–10 (MKNLAERSAG) are cytoplasmic. A helical; Signal-anchor for type II membrane protein membrane pass occupies residues 11–31 (SLYWWLLATLFLPIAIPGLVL). Residues 32-317 (KLLTMMKEQR…KKRAEKLNST (286 aa)) lie on the Peroxisomal side of the membrane. 52-76 (LITGASSGLGEALAHSFFLAGCKVV) provides a ligand contact to NAD(+). A substrate-binding site is contributed by S189. Y202 serves as the catalytic Proton acceptor.

The protein belongs to the short-chain dehydrogenases/reductases (SDR) family.

The protein resides in the peroxisome membrane. Functionally, putative oxidoreductase. This Anopheles gambiae (African malaria mosquito) protein is Dehydrogenase/reductase SDR family protein 7-like.